The sequence spans 181 residues: Oligoribonuclease (181 aa).

The Exonuclease domain maps to 8–171 (LIWIDMEMTG…ADIYDSIEEL (164 aa)). Tyr-129 is a catalytic residue.

The protein belongs to the oligoribonuclease family.

The protein localises to the cytoplasm. Its function is as follows. 3'-to-5' exoribonuclease specific for small oligoribonucleotides. The sequence is that of Oligoribonuclease from Nitrosomonas europaea (strain ATCC 19718 / CIP 103999 / KCTC 2705 / NBRC 14298).